Reading from the N-terminus, the 207-residue chain is UPF0319 protein VV2327 (207 aa).

An N-terminal signal peptide occupies residues 1 to 18 (MLRVLGLAGMLMSFNIHA).

It belongs to the UPF0319 family.

This Vibrio vulnificus (strain YJ016) protein is UPF0319 protein VV2327.